A 506-amino-acid chain; its full sequence is Maturase K (506 aa).

Belongs to the intron maturase 2 family. MatK subfamily.

It is found in the plastid. The protein resides in the chloroplast. Its function is as follows. Usually encoded in the trnK tRNA gene intron. Probably assists in splicing its own and other chloroplast group II introns. The protein is Maturase K of Lathyrus tingitanus (Tangier pea).